Reading from the N-terminus, the 970-residue chain is GEM-interacting protein (970 aa).

Residue Ser-19 is modified to Phosphoserine. Disordered stretches follow at residues 44–76 (PLLSEDPEPDKTPTATVTNEASCWSGPSPEGPV), 224–263 (SEDLRARSQGSPEDSAPQASPGPSKQQERRRRSREEAQAK), and 377–478 (PLDI…ENGL). The segment covering 56 to 65 (PTATVTNEAS) has biased composition (polar residues). A phosphoserine mark is found at Ser-71, Ser-231, Ser-234, Ser-243, Ser-437, and Ser-441. In terms of domain architecture, F-BAR spans 81 to 344 (EELDLRLIRT…CCAPFEPGQR (264 aa)). Residues 231–246 (SQGSPEDSAPQASPGP) are compositionally biased toward polar residues. Residues 459 to 472 (SSDDFEERDPDLGD) are compositionally biased toward acidic residues. The Phorbol-ester/DAG-type zinc finger occupies 493–537 (THQLRRLRGPAKCRECEAFMVSGTECEECFLTCHKRCLETLLILC). The Rho-GAP domain maps to 554–757 (LQLPRDFPEE…FLIVHYEQIF (204 aa)). Thr-660 bears the Phosphothreonine mark. The segment at 762–878 (LPQATEPPPQ…PVKYPRGGVR (117 aa)) is disordered. Residues 766 to 778 (TEPPPQDSSPAPG) show a composition bias toward pro residues. Positions 815–830 (EQHPTATPTEIPTPQS) are enriched in polar residues. The span at 831–844 (DQREDVAEDTKDGG) shows a compositional bias: basic and acidic residues. Over residues 847–863 (VSSQGPEDSLLGTQSRG) the composition is skewed to polar residues. 5 positions are modified to phosphoserine: Ser-885, Ser-907, Ser-914, Ser-919, and Ser-923. The segment at 897–932 (ETPITSVPRGSLRGRGPSPAAASPEGSPLRRTPLPK) is disordered. The segment covering 910-923 (GRGPSPAAASPEGS) has biased composition (low complexity).

In terms of assembly, interacts with GEM through its N-terminal.

Its function is as follows. Stimulates, in vitro and in vivo, the GTPase activity of RhoA. This is GEM-interacting protein (GMIP) from Homo sapiens (Human).